The sequence spans 182 residues: Doublesex- and mab-3-related transcription factor C1 (182 aa).

Thr15 is subject to Phosphoserine. The span at 26-39 (AQVDTATQEESSQG) shows a compositional bias: polar residues. 2 disordered regions span residues 26 to 48 (AQVDTATQEESSQGPVLLNQHPE) and 136 to 174 (QTRHQPCGMPGTAGERGLQLANPSMPPRPTSSGSLPSGH).

The protein belongs to the DMRT family. In terms of tissue distribution, expressed in Sertoli cells in male testis.

This is Doublesex- and mab-3-related transcription factor C1 (Dmrtc1) from Mus musculus (Mouse).